A 228-amino-acid chain; its full sequence is 3,4-dihydroxy-2-butanone 4-phosphate synthase (228 aa).

Residues 37–38, D42, 150–154, and E174 each bind D-ribulose 5-phosphate; these read RE and RRGHT. E38 contacts Mg(2+). H153 serves as a coordination point for Mg(2+).

This sequence belongs to the DHBP synthase family. Homodimer. Mg(2+) serves as cofactor. The cofactor is Mn(2+).

It catalyses the reaction D-ribulose 5-phosphate = (2S)-2-hydroxy-3-oxobutyl phosphate + formate + H(+). It functions in the pathway cofactor biosynthesis; riboflavin biosynthesis; 2-hydroxy-3-oxobutyl phosphate from D-ribulose 5-phosphate: step 1/1. In terms of biological role, catalyzes the conversion of D-ribulose 5-phosphate to formate and 3,4-dihydroxy-2-butanone 4-phosphate. In Photobacterium profundum (strain SS9), this protein is 3,4-dihydroxy-2-butanone 4-phosphate synthase.